A 363-amino-acid polypeptide reads, in one-letter code: Ribonuclease D (363 aa).

The 164-residue stretch at 5–168 (ITHPSELTDR…AIHDELTRRL (164 aa)) folds into the 3'-5' exonuclease domain. The region spanning 208–288 (EPAAQRRLLR…NTPLPDEEHA (81 aa)) is the HRDC domain.

This sequence belongs to the RNase D family. A divalent metal cation is required as a cofactor.

It localises to the cytoplasm. The catalysed reaction is Exonucleolytic cleavage that removes extra residues from the 3'-terminus of tRNA to produce 5'-mononucleotides.. Functionally, exonuclease involved in the 3' processing of various precursor tRNAs. Initiates hydrolysis at the 3'-terminus of an RNA molecule and releases 5'-mononucleotides. The sequence is that of Ribonuclease D from Xanthomonas oryzae pv. oryzae (strain KACC10331 / KXO85).